A 90-amino-acid polypeptide reads, in one-letter code: Small ribosomal subunit protein bS16 (90 aa).

The protein belongs to the bacterial ribosomal protein bS16 family.

The chain is Small ribosomal subunit protein bS16 from Streptococcus pneumoniae (strain Hungary19A-6).